The primary structure comprises 251 residues: Imidazole glycerol phosphate synthase subunit HisF (251 aa).

Catalysis depends on residues Asp-11 and Asp-130.

Belongs to the HisA/HisF family. As to quaternary structure, heterodimer of HisH and HisF.

It is found in the cytoplasm. It carries out the reaction 5-[(5-phospho-1-deoxy-D-ribulos-1-ylimino)methylamino]-1-(5-phospho-beta-D-ribosyl)imidazole-4-carboxamide + L-glutamine = D-erythro-1-(imidazol-4-yl)glycerol 3-phosphate + 5-amino-1-(5-phospho-beta-D-ribosyl)imidazole-4-carboxamide + L-glutamate + H(+). The protein operates within amino-acid biosynthesis; L-histidine biosynthesis; L-histidine from 5-phospho-alpha-D-ribose 1-diphosphate: step 5/9. Functionally, IGPS catalyzes the conversion of PRFAR and glutamine to IGP, AICAR and glutamate. The HisF subunit catalyzes the cyclization activity that produces IGP and AICAR from PRFAR using the ammonia provided by the HisH subunit. This chain is Imidazole glycerol phosphate synthase subunit HisF, found in Listeria monocytogenes serotype 4b (strain CLIP80459).